Consider the following 177-residue polypeptide: Large ribosomal subunit protein uL6 (177 aa).

It belongs to the universal ribosomal protein uL6 family. Part of the 50S ribosomal subunit.

Functionally, this protein binds to the 23S rRNA, and is important in its secondary structure. It is located near the subunit interface in the base of the L7/L12 stalk, and near the tRNA binding site of the peptidyltransferase center. The chain is Large ribosomal subunit protein uL6 from Methylobacterium nodulans (strain LMG 21967 / CNCM I-2342 / ORS 2060).